We begin with the raw amino-acid sequence, 1747 residues long: Retroelement silencing factor 1 (1747 aa).

Residue lysine 216 forms a Glycyl lysine isopeptide (Lys-Gly) (interchain with G-Cter in SUMO2) linkage. Serine 221 carries the post-translational modification Phosphoserine. A compositionally biased stretch (polar residues) spans 261-272 (TSAVPSQQYATQ). The disordered stretch occupies residues 261–280 (TSAVPSQQYATQTDKRPPPP). Residue lysine 707 forms a Glycyl lysine isopeptide (Lys-Gly) (interchain with G-Cter in SUMO2) linkage. Disordered regions lie at residues 833–856 (PLTQ…NVNQ), 923–956 (PQKP…GFQK), and 1073–1101 (EGSV…KDPA). The segment covering 842–856 (ESTNGNSEVTPNVNQ) has biased composition (polar residues). The segment covering 937 to 956 (REPEKQLDNTTENKDFGFQK) has biased composition (basic and acidic residues). The segment covering 1073–1087 (EGSVGQQTTYQTSED) has biased composition (polar residues). The span at 1089–1101 (TADKTSSDSKDPA) shows a compositional bias: basic and acidic residues. Lysine 1136 is covalently cross-linked (Glycyl lysine isopeptide (Lys-Gly) (interchain with G-Cter in SUMO2)). Serine 1145 carries the post-translational modification Phosphoserine. The disordered stretch occupies residues 1200–1274 (EEKQKEQCSP…KSLPRTEQEL (75 aa)). Over residues 1217 to 1226 (QGERTSDRDV) the composition is skewed to basic and acidic residues. Position 1240 is a phosphothreonine (threonine 1240). Residues 1242 to 1261 (PDGKSHFPELQDDSRKDTPK) show a composition bias toward basic and acidic residues. Serine 1358 is subject to Phosphoserine. Glycyl lysine isopeptide (Lys-Gly) (interchain with G-Cter in SUMO2) cross-links involve residues lysine 1528 and lysine 1636. The disordered stretch occupies residues 1686–1716 (KRTQKDSQERDNVNSRLSKRSFSADGFEMLQ). Positions 1689-1698 (QKDSQERDNV) are enriched in basic and acidic residues. Serine 1708 is subject to Phosphoserine. Lysine 1723 participates in a covalent cross-link: Glycyl lysine isopeptide (Lys-Gly) (interchain with G-Cter in SUMO2). At serine 1740 the chain carries Phosphoserine.

Interacts with SETDB1.

Its subcellular location is the nucleus. Its function is as follows. Plays a role in the regulation of imprinted gene expression, regulates repressive epigenetic modifications associated with SETDB1. Required for the recruitment or accumulation of SETDB1 to the endogenous retroviruses (ERVs) and maintenance of repressive chromatin configuration, contributing to a subset of the SETDB1-dependent ERV silencing in embryonic stem cells. The polypeptide is Retroelement silencing factor 1 (Homo sapiens (Human)).